A 273-amino-acid polypeptide reads, in one-letter code: 2-dehydro-3-deoxyphosphooctonate aldolase (273 aa).

The protein belongs to the KdsA family.

The protein resides in the cytoplasm. It carries out the reaction D-arabinose 5-phosphate + phosphoenolpyruvate + H2O = 3-deoxy-alpha-D-manno-2-octulosonate-8-phosphate + phosphate. Its pathway is carbohydrate biosynthesis; 3-deoxy-D-manno-octulosonate biosynthesis; 3-deoxy-D-manno-octulosonate from D-ribulose 5-phosphate: step 2/3. It functions in the pathway bacterial outer membrane biogenesis; lipopolysaccharide biosynthesis. This Nitratidesulfovibrio vulgaris (strain ATCC 29579 / DSM 644 / CCUG 34227 / NCIMB 8303 / VKM B-1760 / Hildenborough) (Desulfovibrio vulgaris) protein is 2-dehydro-3-deoxyphosphooctonate aldolase.